The following is a 261-amino-acid chain: Trifolitoxin immunity protein (261 aa).

Functionally, required for TFX resistance. The polypeptide is Trifolitoxin immunity protein (tfxG) (Rhizobium leguminosarum bv. trifolii).